Here is a 327-residue protein sequence, read N- to C-terminus: MENVFDYEDIQLIPAKCIVNSRSECDTTVTLGKHKFKLPVVPANMQTIIDERIATYLAENNYFYIMHRFQPEKRISFIRDMQSRGLIASISVGVKADEYEFVQQLAAEHLTPEYITIDIAHGHSNAVINMIQHIKKHLPESFVIAGNVGTPEAVRELENAGADATKVGIGPGKVCITKIKTGFGTGGWQLAALRWCAKAASKPIIADGGIRTHGDVAKSIRFGATMVMIGSLFAGHEESPGETIEKDGKLYKEYFGSASEFQKGEKKNVEGKKMFVEHKGSLEDTLIEMEQDLQSSISYAGGTKLDSIRTVDYVVVKNSIFNGDKVY.

Cys175 serves as the catalytic Thioimidate intermediate. Position 204-227 (204-227 (IIADGGIRTHGDVAKSIRFGATMV)) interacts with NADP(+).

Belongs to the IMPDH/GMPR family. GuaC type 2 subfamily.

It catalyses the reaction IMP + NH4(+) + NADP(+) = GMP + NADPH + 2 H(+). Catalyzes the irreversible NADPH-dependent deamination of GMP to IMP. It functions in the conversion of nucleobase, nucleoside and nucleotide derivatives of G to A nucleotides, and in maintaining the intracellular balance of A and G nucleotides. This is GMP reductase from Bacillus cereus (strain ATCC 10987 / NRS 248).